Reading from the N-terminus, the 965-residue chain is Klaroid protein (965 aa).

The interval 1-20 (MSENTYQIETRRRSRSKTPF) is disordered. A run of 2 helical transmembrane segments spans residues 303-323 (TIGG…GSVL) and 343-363 (FLIF…LLLQ). Positions 585 to 612 (SSDAEVQIERLNREIAFIKLALSDKQAE) form a coiled coil. Residues 801-963 (GGQILSTRCT…YRFRVHGKPP (163 aa)) form the SUN domain.

Core component of the LINC complex which is composed of inner nuclear membrane SUN domain-containing proteins coupled to outer nuclear membrane KASH domain-containing nesprins. Expressed in all cells in the eye disk.

It is found in the membrane. The protein localises to the cytoplasm. It localises to the cytoskeleton. Its subcellular location is the microtubule organizing center. The protein resides in the perinuclear region. Component of the LINC (LInker of Nucleoskeleton and Cytoskeleton) complex involved in the connection between the nuclear lamina and the cytoskeleton. Is required to nuclear migration in eye and to anchor klar in the nuclear membrane. The sequence is that of Klaroid protein from Drosophila melanogaster (Fruit fly).